Reading from the N-terminus, the 252-residue chain is F-box/SPRY domain-containing protein 1 (252 aa).

The 48-residue stretch at 1–48 (MVDPLCNYNVLESIFSYLELNDLNRCSQVCKSWYHFLNDENSDVWRWH) folds into the F-box domain. The B30.2/SPRY domain occupies 58-250 (VKSDLLSSVT…VSMVYLGTPL (193 aa)).

Belongs to the FBXO45/Fsn family. Component of an E3 ubiquitin ligase complex composed of hiw and Fsn.

Its subcellular location is the synapse. It participates in protein modification; protein ubiquitination. Required in the presynaptic motoneuron to down-regulate the levels of wnd and restrain synaptic terminal growth at the neuromuscular junction (NMJ). This chain is F-box/SPRY domain-containing protein 1, found in Drosophila grimshawi (Hawaiian fruit fly).